The following is a 477-amino-acid chain: MSSLRNLLCRLISPLCKHGSYSHLQLFLIGDVSKSENCVLSMFVTNKKFLSKDLTDNFYRKFLKVWLKCDLDSRNQIKAIFNKMMMTKNFFLLLAYLYFLYRQCKVLKILALYKIQRLTWKQIVERFKQYPIHKLNQLLEIPSFVSFNDLYYYLFQQQLMLPISTHCNIPCMKLFCLRNFEQCNDITLRYAHRASNLTYQDIFHGCSLTVPCGNFIFAMAMAMIENYCYSFDRFLIPLENNNLVPIVLNKQEKHQLPKILTFALTTVLKRSLTSSIISLPVLCFCKTKCLRYAKIDSYLTVICSKCGHCLNSGKERLKGKQTFSLSSMFYYRDRQEKNIIYSMHTDLLYCSLCGGQRLTLEKVYELYEYSVSGIQVKSVSWKAIIGTNSACTILNDSVKFDAIVACSCRTCYSMIHLQNLTINKLLKLISHSTEFQCQDCQNIYRETCLDLEDCGEICTGCKISQLAKCTQHGCDTW.

The protein belongs to the herpesviridae UL49 family.

The sequence is that of Protein U33 (U33) from Homo sapiens (Human).